The sequence spans 376 residues: N-acetyldiaminopimelate deacetylase (376 aa).

D70 is a catalytic residue. E129 serves as the catalytic Proton acceptor.

It belongs to the peptidase M20A family. N-acetyldiaminopimelate deacetylase subfamily.

It catalyses the reaction N-acetyl-(2S,6S)-2,6-diaminopimelate + H2O = (2S,6S)-2,6-diaminopimelate + acetate. It functions in the pathway amino-acid biosynthesis; L-lysine biosynthesis via DAP pathway; LL-2,6-diaminopimelate from (S)-tetrahydrodipicolinate (acetylase route): step 3/3. Functionally, catalyzes the conversion of N-acetyl-diaminopimelate to diaminopimelate and acetate. The chain is N-acetyldiaminopimelate deacetylase from Geobacillus sp. (strain WCH70).